We begin with the raw amino-acid sequence, 416 residues long: D-amino acid dehydrogenase (416 aa).

3–17 (VTILGAGVIGVTTAY) lines the FAD pocket.

This sequence belongs to the DadA oxidoreductase family. The cofactor is FAD.

The enzyme catalyses a D-alpha-amino acid + A + H2O = a 2-oxocarboxylate + AH2 + NH4(+). The protein operates within amino-acid degradation; D-alanine degradation; NH(3) and pyruvate from D-alanine: step 1/1. Its function is as follows. Oxidative deamination of D-amino acids. This is D-amino acid dehydrogenase from Rhizobium rhizogenes (strain K84 / ATCC BAA-868) (Agrobacterium radiobacter).